Consider the following 413-residue polypeptide: Probable glucan 1,3-beta-glucosidase ARB_04467 (413 aa).

The N-terminal stretch at 1–17 is a signal peptide; it reads MKFGSLLGLSLVGLSVA. The substrate site is built by glutamate 46, glutamate 202, and tyrosine 262. Residue glutamate 202 is the Proton donor of the active site. Cysteine 282 and cysteine 412 are oxidised to a cystine. The active-site Nucleophile is glutamate 300.

The protein belongs to the glycosyl hydrolase 5 (cellulase A) family. As to quaternary structure, monomer.

Its subcellular location is the secreted. The protein resides in the cell wall. It carries out the reaction Successive hydrolysis of beta-D-glucose units from the non-reducing ends of (1-&gt;3)-beta-D-glucans, releasing alpha-glucose.. In terms of biological role, major glucan 1,3-beta-glucosidase required for cell wall integrity. Beta-glucanases participate in the metabolism of beta-glucan, the main structural component of the cell wall. Can also function biosynthetically as a transglycosylase. Functions to deliver glucan from the cell to the extracellular matrix. Involved in cell-substrate and cell-cell adhesion. The polypeptide is Probable glucan 1,3-beta-glucosidase ARB_04467 (Arthroderma benhamiae (strain ATCC MYA-4681 / CBS 112371) (Trichophyton mentagrophytes)).